Here is a 430-residue protein sequence, read N- to C-terminus: Histidine--tRNA ligase (430 aa).

The protein belongs to the class-II aminoacyl-tRNA synthetase family. In terms of assembly, homodimer.

It localises to the cytoplasm. The enzyme catalyses tRNA(His) + L-histidine + ATP = L-histidyl-tRNA(His) + AMP + diphosphate + H(+). The sequence is that of Histidine--tRNA ligase from Synechococcus sp. (strain CC9902).